We begin with the raw amino-acid sequence, 181 residues long: Large ribosomal subunit protein eL18 (181 aa).

The protein belongs to the eukaryotic ribosomal protein eL18 family.

The protein resides in the cytoplasm. This Dictyostelium discoideum (Social amoeba) protein is Large ribosomal subunit protein eL18 (rpl18).